Here is a 349-residue protein sequence, read N- to C-terminus: UDP-N-acetylenolpyruvoylglucosamine reductase (349 aa).

Residues valine 17–glutamine 187 enclose the FAD-binding PCMH-type domain. Residue arginine 163 is part of the active site. Residue serine 233 is the Proton donor of the active site. Residue glutamate 328 is part of the active site.

It belongs to the MurB family. The cofactor is FAD.

Its subcellular location is the cytoplasm. The catalysed reaction is UDP-N-acetyl-alpha-D-muramate + NADP(+) = UDP-N-acetyl-3-O-(1-carboxyvinyl)-alpha-D-glucosamine + NADPH + H(+). The protein operates within cell wall biogenesis; peptidoglycan biosynthesis. In terms of biological role, cell wall formation. The sequence is that of UDP-N-acetylenolpyruvoylglucosamine reductase from Aliivibrio fischeri (strain ATCC 700601 / ES114) (Vibrio fischeri).